Consider the following 604-residue polypeptide: Sulfite reductase [NADPH] flavoprotein alpha-component (604 aa).

Positions 65-203 constitute a Flavodoxin-like domain; sequence VTILYGSQTG…AAGQWHADVL (139 aa). FMN contacts are provided by residues 71-76, 118-121, and 154-163; these read SQTGNG, STHG, and LGDSSYEFFC. The region spanning 236–453 is the FAD-binding FR-type domain; that stretch reads QNPYSAEVLV…VEPNKHFRLP (218 aa). FAD-binding positions include T324, L358, 392 to 395, 410 to 412, and 425 to 428; these read RLYS, TVA, and GGAS. Residues 524–525, 530–534, and D566 each bind NADP(+); these read SR and KIYVQ. Y604 serves as a coordination point for FAD.

Belongs to the NADPH-dependent sulphite reductase flavoprotein subunit CysJ family. It in the N-terminal section; belongs to the flavodoxin family. This sequence in the C-terminal section; belongs to the flavoprotein pyridine nucleotide cytochrome reductase family. As to quaternary structure, alpha(8)-beta(8). The alpha component is a flavoprotein, the beta component is a hemoprotein. The cofactor is FAD. FMN serves as cofactor.

The catalysed reaction is hydrogen sulfide + 3 NADP(+) + 3 H2O = sulfite + 3 NADPH + 4 H(+). It participates in sulfur metabolism; hydrogen sulfide biosynthesis; hydrogen sulfide from sulfite (NADPH route): step 1/1. Its function is as follows. Component of the sulfite reductase complex that catalyzes the 6-electron reduction of sulfite to sulfide. This is one of several activities required for the biosynthesis of L-cysteine from sulfate. The flavoprotein component catalyzes the electron flow from NADPH -&gt; FAD -&gt; FMN to the hemoprotein component. The protein is Sulfite reductase [NADPH] flavoprotein alpha-component of Shewanella sp. (strain ANA-3).